Consider the following 1010-residue polypeptide: Peroxisome proliferator-activated receptor gamma coactivator 1-beta (1010 aa).

An abolishes DNA transcriptional activity when missing region spans residues 1–91 (MAGNDCGALL…FFQIDSENEA (91 aa)). Positions 115 to 134 (GLDEGDTPSCTPASPAPLSV) are disordered. The LXXLL motif 1 motif lies at 140–144 (LERLL). Residues Ser145 and Ser148 each carry the phosphoserine modification. The LXXLL motif 2 signature appears at 156–160 (LQKLL). 3 disordered regions span residues 165–214 (SPTA…RPCT), 227–282 (PRGK…QVPK), and 306–329 (PQRA…PRSR). 2 stretches are compositionally biased toward polar residues: residues 178–189 (TWSQTSLSSRSQ) and 264–279 (PQDS…NSAQ). The short motif at 342-346 (LRELL) is the LXXLL motif 3 element. The segment covering 369–384 (TPQSRTRPPKDSQASP) has biased composition (polar residues). 3 disordered regions span residues 369-475 (TPQS…VCPV), 517-567 (GLTD…CLML), and 590-674 (GTAG…QKRP). At Ser383 the chain carries Phosphoserine. A compositionally biased stretch (basic and acidic residues) spans 411 to 428 (LRLEVKRDVNKPARQKRE). Acidic residues predominate over residues 429–449 (EDEEEEEEEEEEEEKEDEEEE). Residues 521-532 (SSQGQQLPLGSQ) show a composition bias toward low complexity. The span at 604–618 (PMEEDPFKQDTKHSP) shows a compositional bias: basic and acidic residues. Polar residues-rich tracts occupy residues 619–638 (GQDT…TATP) and 659–670 (QHATTQPVSQAG). The residue at position 628 (Ser628) is a Phosphoserine. Residues 681–684 (DHDY) carry the HCFC1-binding-motif (HBM) motif. 2 disordered regions span residues 714-744 (HQGA…SMQL) and 778-881 (DTVF…KKRR). Positions 782–794 (EDSSSSSGESSFL) are enriched in low complexity. Positions 795-811 (LEEEEEEGGEEDDEGED) are enriched in acidic residues. Positions 832–852 (SRQLCSRSRSSSGSSSCSSWS) are enriched in low complexity. The 75-residue stretch at 889-963 (RVVYIRNLSG…RNEPSFHLSY (75 aa)) folds into the RRM domain.

As to quaternary structure, interacts with estrogen receptor alpha/ESR1. Interacts with Sterol regulatory binding transcription factor 1/SREBF1, PPAR-alpha/PPARA, thyroid hormone receptor beta/THRB and host cell factor/HCFC1. Interacts with Estrogen-related receptor gamma/ESRRG and alpha/ESRRA. Interacts with PRDM16. As to expression, ubiquitous with higher expression in heart, brown adipose tissue.

It is found in the nucleus. Plays a role of stimulator of transcription factors and nuclear receptors activities. Activates transcriptional activity of estrogen receptor alpha, nuclear respiratory factor 1 (NRF1) and glucocorticoid receptor in the presence of glucocorticoids. May play a role in constitutive non-adrenergic-mediated mitochondrial biogenesis as suggested by increased basal oxygen consumption and mitochondrial number when overexpressed. May be part of the pathways regulating the elevation of gluconeogenesis, beta-oxidation of fatty acids and ketogenesis during fasting. Stimulates SREBP-mediated lipogenic gene expression in the liver. Induces energy expenditure and antagonizes obesity when overexpressed. Also induces the expression of mitochondrial genes involved in oxidative metabolism. Induces the expression of PERM1 in the skeletal muscle in an ESRRA-dependent manner. The protein is Peroxisome proliferator-activated receptor gamma coactivator 1-beta (Ppargc1b) of Rattus norvegicus (Rat).